The chain runs to 333 residues: Ornithine carbamoyltransferase (333 aa).

Residues Ser-56–Thr-59, Gln-83, Arg-107, and His-134–Gln-137 contribute to the carbamoyl phosphate site. Residues Asn-167, Asp-231, and Ser-235–Met-236 contribute to the L-ornithine site. Carbamoyl phosphate is bound by residues Cys-273–Leu-274 and Arg-318.

The protein belongs to the aspartate/ornithine carbamoyltransferase superfamily. OTCase family.

It is found in the cytoplasm. It carries out the reaction carbamoyl phosphate + L-ornithine = L-citrulline + phosphate + H(+). It functions in the pathway amino-acid biosynthesis; L-arginine biosynthesis; L-arginine from L-ornithine and carbamoyl phosphate: step 1/3. Its function is as follows. Reversibly catalyzes the transfer of the carbamoyl group from carbamoyl phosphate (CP) to the N(epsilon) atom of ornithine (ORN) to produce L-citrulline. In Staphylococcus aureus (strain COL), this protein is Ornithine carbamoyltransferase (argF).